A 134-amino-acid polypeptide reads, in one-letter code: Transcription antitermination protein NusB (134 aa).

It belongs to the NusB family.

In terms of biological role, involved in transcription antitermination. Required for transcription of ribosomal RNA (rRNA) genes. Binds specifically to the boxA antiterminator sequence of the ribosomal RNA (rrn) operons. The sequence is that of Transcription antitermination protein NusB from Shewanella frigidimarina (strain NCIMB 400).